The following is a 375-amino-acid chain: MFISEIQLKNYRNYEKLELSFEDKVNVIIGENAQGKTNLMEAIYVLAMAKSHRTSNDRELIRWDEEFGQIKGKLQKRNSSLSLELNISKKGKKAKLNQLEQQKLSQYIGVMNVVMFAPEDLNLVKGSPQVRRRFLDMELGQIAPIYLYELSQYQKVLTQRNHLLKKMQGNSKNEETMLDVFTLQLIEHGAKILQKRFEFLHLLQEWAAPIHRGISRGLEELEIVYKPSVDVSESMDLSKIKEVYYESFQSVKQREIFRGTTLIGPHRDDLQFFVNSKNVQVFGSQGQQRTTALSLKLAEIELIYSEVKEYPILLLDDVLSELDDYRQSHLLNTIQGKVQTFVTTTSVDGIEHETLKDAKTIHVTNGTVDCEIDRA.

30 to 37 serves as a coordination point for ATP; the sequence is GENAQGKT.

Belongs to the RecF family.

It localises to the cytoplasm. The RecF protein is involved in DNA metabolism; it is required for DNA replication and normal SOS inducibility. RecF binds preferentially to single-stranded, linear DNA. It also seems to bind ATP. The protein is DNA replication and repair protein RecF of Bacillus cereus (strain G9842).